A 118-amino-acid chain; its full sequence is Large ribosomal subunit protein uL18 (118 aa).

Belongs to the universal ribosomal protein uL18 family. Part of the 50S ribosomal subunit; part of the 5S rRNA/L5/L18/L25 subcomplex. Contacts the 5S and 23S rRNAs.

In terms of biological role, this is one of the proteins that bind and probably mediate the attachment of the 5S RNA into the large ribosomal subunit, where it forms part of the central protuberance. The sequence is that of Large ribosomal subunit protein uL18 from Dechloromonas aromatica (strain RCB).